A 355-amino-acid chain; its full sequence is MSELKNDRYLRALLRQPVDVTPVWMMRQAGRYLPEYKATRAVAGDFMSLCKNAELACEVTLQPLRRYALDAAILFSDILTIPDAMGLGLYFETGEGPRFSSPVTCRADVEKLPIPDPEQELGYVMNAVRTIRKNLNGEVPLIGFSGSPWTLATYMVEGGSSKAFTKLKKMMYAEPQTLHLMLDKLADSVTLYLNAQIRAGAQSVMIFDTWGGVLTGRDYLEFSLNYMHKIVDGLLRENDGRRVPVTLFTKGGGQWLEAMAATGCDALGLDWTTDLADARRRVGDRVALQGNMDPSMLYASPARIEQEVAGILEGYGHGNGHVFNLGHGIHQDVPPEHAGAFVEAVHRLSRPYHLG.

Substrate-binding positions include 27–31 (RQAGR), Asp77, Tyr154, Thr209, and His327.

Belongs to the uroporphyrinogen decarboxylase family. As to quaternary structure, homodimer.

Its subcellular location is the cytoplasm. The catalysed reaction is uroporphyrinogen III + 4 H(+) = coproporphyrinogen III + 4 CO2. It functions in the pathway porphyrin-containing compound metabolism; protoporphyrin-IX biosynthesis; coproporphyrinogen-III from 5-aminolevulinate: step 4/4. Catalyzes the decarboxylation of four acetate groups of uroporphyrinogen-III to yield coproporphyrinogen-III. This chain is Uroporphyrinogen decarboxylase, found in Erwinia tasmaniensis (strain DSM 17950 / CFBP 7177 / CIP 109463 / NCPPB 4357 / Et1/99).